A 201-amino-acid chain; its full sequence is 3-isopropylmalate dehydratase small subunit (201 aa).

It belongs to the LeuD family. LeuD type 1 subfamily. As to quaternary structure, heterodimer of LeuC and LeuD.

The catalysed reaction is (2R,3S)-3-isopropylmalate = (2S)-2-isopropylmalate. Its pathway is amino-acid biosynthesis; L-leucine biosynthesis; L-leucine from 3-methyl-2-oxobutanoate: step 2/4. In terms of biological role, catalyzes the isomerization between 2-isopropylmalate and 3-isopropylmalate, via the formation of 2-isopropylmaleate. The polypeptide is 3-isopropylmalate dehydratase small subunit (Ruegeria pomeroyi (strain ATCC 700808 / DSM 15171 / DSS-3) (Silicibacter pomeroyi)).